We begin with the raw amino-acid sequence, 723 residues long: ATP-dependent DNA helicase RRM3 (723 aa).

Disordered regions lie at residues 1 to 31 (MFRS…SGSH) and 61 to 101 (DLES…DDDP). S64 carries the post-translational modification Phosphoserine. A compositionally biased stretch (low complexity) spans 83 to 96 (NNSSSLFSQSQGSF). 254 to 261 (GSAGTGKS) is a binding site for ATP. The DNA-binding element occupies 682–701 (QVYVALSRAVTMDTLQVLNF).

It belongs to the helicase family. As to quaternary structure, interacts with DEF1 and POL30.

The protein localises to the nucleus. The protein resides in the chromosome. Its subcellular location is the telomere. It carries out the reaction Couples ATP hydrolysis with the unwinding of duplex DNA at the replication fork by translocating in the 5'-3' direction. This creates two antiparallel DNA single strands (ssDNA). The leading ssDNA polymer is the template for DNA polymerase III holoenzyme which synthesizes a continuous strand.. The enzyme catalyses ATP + H2O = ADP + phosphate + H(+). In terms of biological role, 5' to 3' DNA replicative helicase recruited to paused replisomes to promote fork progression throughout nonhistone protein-DNA complexes, naturally occurring impediments that are encountered in each S phase where replication forks pauses. Needed for normal fork progression through over 1000 discrete sites scattered throughout the genome, like rDNA, tRNA genes, centromeres, active replication origins, or transcriptional silencers. Required for timely replication of the telomere and subtelomeric DNA and for wild-type levels of telomeric silencing. Involved in regulation of Ty1 transposition and protects the genome from instability at nascent sites of retrotransposition. Involved in DNA repair during stalled replication fork, regulation of fragile sites expression and essential for genome stability. Also plays a role in mtDNA replication. Has G-quadruplex (G4) unwinding activity and can suppress G4-induced genome instability when PIF1 levels are low. This chain is ATP-dependent DNA helicase RRM3, found in Saccharomyces cerevisiae (strain ATCC 204508 / S288c) (Baker's yeast).